The following is a 47-amino-acid chain: Delta-ctenitoxin-Pr2d (47 aa).

5 cysteine pairs are disulfide-bonded: C3–C17, C10–C23, C14–C46, C16–C31, and C25–C29.

As to expression, expressed by the venom gland.

Its subcellular location is the secreted. In terms of biological role, blocks voltage-gated sodium channels (Nav). Causes rapid general spastic paralysis and death when injected in mice at dose levels of less than 2 ug per mouse. The chain is Delta-ctenitoxin-Pr2d from Phoneutria reidyi (Brazilian Amazonian armed spider).